A 258-amino-acid polypeptide reads, in one-letter code: Putative phosphoenolpyruvate synthase regulatory protein (258 aa).

An ADP-binding site is contributed by 146–153 (GVSRVGKT).

This sequence belongs to the pyruvate, phosphate/water dikinase regulatory protein family. PSRP subfamily.

It carries out the reaction [pyruvate, water dikinase] + ADP = [pyruvate, water dikinase]-phosphate + AMP + H(+). It catalyses the reaction [pyruvate, water dikinase]-phosphate + phosphate + H(+) = [pyruvate, water dikinase] + diphosphate. Its function is as follows. Bifunctional serine/threonine kinase and phosphorylase involved in the regulation of the phosphoenolpyruvate synthase (PEPS) by catalyzing its phosphorylation/dephosphorylation. This is Putative phosphoenolpyruvate synthase regulatory protein from Thiobacillus denitrificans (strain ATCC 25259 / T1).